A 608-amino-acid chain; its full sequence is Phosphogluconate dehydratase (608 aa).

Residues Cys154 and Cys221 each coordinate [4Fe-4S] cluster.

Belongs to the IlvD/Edd family. [4Fe-4S] cluster is required as a cofactor.

The catalysed reaction is 6-phospho-D-gluconate = 2-dehydro-3-deoxy-6-phospho-D-gluconate + H2O. The protein operates within carbohydrate metabolism; Entner-Doudoroff pathway. Catalyzes the dehydration of 6-phospho-D-gluconate to 2-dehydro-3-deoxy-6-phospho-D-gluconate. The protein is Phosphogluconate dehydratase of Pseudomonas aeruginosa (strain ATCC 15692 / DSM 22644 / CIP 104116 / JCM 14847 / LMG 12228 / 1C / PRS 101 / PAO1).